A 256-amino-acid polypeptide reads, in one-letter code: 5'-nucleotidase SurE (256 aa).

Residues D8, D9, S42, and N94 each contribute to the a divalent metal cation site.

Belongs to the SurE nucleotidase family. It depends on a divalent metal cation as a cofactor.

The protein localises to the cytoplasm. The catalysed reaction is a ribonucleoside 5'-phosphate + H2O = a ribonucleoside + phosphate. Nucleotidase that shows phosphatase activity on nucleoside 5'-monophosphates. This Ehrlichia chaffeensis (strain ATCC CRL-10679 / Arkansas) protein is 5'-nucleotidase SurE.